A 94-amino-acid chain; its full sequence is U1-theraphotoxin-Sp1a (94 aa).

The first 22 residues, 1–22 (MIFLLPSIISVMLLAEPVLMLG), serve as a signal peptide directing secretion. Positions 23 to 58 (DTEDADLMEMVQLSRPFFNPIIRAVELVELREERQR) are excised as a propeptide. 3 cysteine pairs are disulfide-bonded: cysteine 60–cysteine 78, cysteine 67–cysteine 83, and cysteine 77–cysteine 88. Valine 92 is subject to Valine amide.

This sequence belongs to the neurotoxin 14 (magi-1) family. OAIP-1 subfamily. As to expression, expressed by the venom gland.

Its subcellular location is the secreted. Functionally, probable ion channel inhibitor. Shows insecticidal activity. Acts synergistically with the neonicotinoid insecticide imidacloprid. Is neither a repellent that repels insects nor an attractant that is preferentially consumed by insects. Is very stable. This Selenotypus plumipes (Australian featherleg tarantula) protein is U1-theraphotoxin-Sp1a.